A 284-amino-acid chain; its full sequence is Tropomyosin (284 aa).

Residues 1 to 280 (MDAIKKKMQA…SDELDQTFAE (280 aa)) are a coiled coil.

Belongs to the tropomyosin family. In terms of assembly, homodimer.

Its function is as follows. Tropomyosin, in association with the troponin complex, plays a central role in the calcium dependent regulation of muscle contraction. The polypeptide is Tropomyosin (Sinonovacula constricta (Razor clam)).